The primary structure comprises 278 residues: HTH-type transcriptional activator RhaS (278 aa).

Positions 174-272 (NLLLAWLEDH…NWSPRDIRQG (99 aa)) constitute an HTH araC/xylS-type domain. 2 consecutive DNA-binding regions (H-T-H motif) follow at residues 191–212 (DAVAEQFSLSLRTLHRQLKQQT) and 239–262 (VTDIAYRCGFSDSNHFSTLFRREF).

As to quaternary structure, binds DNA as a dimer.

The protein localises to the cytoplasm. Its function is as follows. Activates expression of the rhaBAD and rhaT operons. This is HTH-type transcriptional activator RhaS from Escherichia coli (strain SE11).